We begin with the raw amino-acid sequence, 505 residues long: ATP synthase subunit alpha, chloroplastic (505 aa).

Residue 170–177 (GDRQTGKT) participates in ATP binding.

It belongs to the ATPase alpha/beta chains family. F-type ATPases have 2 components, CF(1) - the catalytic core - and CF(0) - the membrane proton channel. CF(1) has five subunits: alpha(3), beta(3), gamma(1), delta(1), epsilon(1). CF(0) has four main subunits: a, b, b' and c.

It localises to the plastid. The protein resides in the chloroplast thylakoid membrane. The catalysed reaction is ATP + H2O + 4 H(+)(in) = ADP + phosphate + 5 H(+)(out). In terms of biological role, produces ATP from ADP in the presence of a proton gradient across the membrane. The alpha chain is a regulatory subunit. The polypeptide is ATP synthase subunit alpha, chloroplastic (Oenothera parviflora (Small-flowered evening primrose)).